Consider the following 449-residue polypeptide: Tubulin beta-8 chain (449 aa).

Residues Gln-11, Glu-69, Ser-138, Gly-142, Thr-143, Gly-144, Asn-204, and Asn-226 each contribute to the GTP site. Glu-69 contributes to the Mg(2+) binding site. The tract at residues 428-449 (ATADEEEGYEYEEDEVEVQEEQ) is disordered. Acidic residues predominate over residues 429-449 (TADEEEGYEYEEDEVEVQEEQ).

Belongs to the tubulin family. In terms of assembly, dimer of alpha and beta chains. A typical microtubule is a hollow water-filled tube with an outer diameter of 25 nm and an inner diameter of 15 nM. Alpha-beta heterodimers associate head-to-tail to form protofilaments running lengthwise along the microtubule wall with the beta-tubulin subunit facing the microtubule plus end conferring a structural polarity. Microtubules usually have 13 protofilaments but different protofilament numbers can be found in some organisms and specialized cells. Requires Mg(2+) as cofactor.

It localises to the cytoplasm. The protein resides in the cytoskeleton. Its function is as follows. Tubulin is the major constituent of microtubules, a cylinder consisting of laterally associated linear protofilaments composed of alpha- and beta-tubulin heterodimers. Microtubules grow by the addition of GTP-tubulin dimers to the microtubule end, where a stabilizing cap forms. Below the cap, tubulin dimers are in GDP-bound state, owing to GTPase activity of alpha-tubulin. The polypeptide is Tubulin beta-8 chain (TUBB8) (Arabidopsis thaliana (Mouse-ear cress)).